Here is a 272-residue protein sequence, read N- to C-terminus: Probable nitrilase C965.09 (272 aa).

Residues 3–244 (ANIACVQMAP…EGVISYTVDL (242 aa)) form the CN hydrolase domain. E45 acts as the Proton acceptor in catalysis. The Proton donor role is filled by K118. C150 (nucleophile) is an active-site residue.

Belongs to the carbon-nitrogen hydrolase superfamily.

The protein resides in the cytoplasm. It localises to the nucleus. This Schizosaccharomyces pombe (strain 972 / ATCC 24843) (Fission yeast) protein is Probable nitrilase C965.09.